The following is a 507-amino-acid chain: Congo red hypersensitive protein 1 (507 aa).

The first 22 residues, 1–22 (MKVLDLLTVLSASSLLSTFAAA), serve as a signal peptide directing secretion. The GH16 domain occupies 34-260 (ASSTASCNPL…KVIVTDYSTG (227 aa)). A disulfide bridge connects residues cysteine 40 and cysteine 48. A glycan (N-linked (GlcNAc...) asparagine) is linked at asparagine 117. Glutamate 134 functions as the Nucleophile in the catalytic mechanism. Glutamate 138 functions as the Proton donor in the catalytic mechanism. Glutamate 138 is a chitin binding site. 2 N-linked (GlcNAc...) asparagine glycosylation sites follow: asparagine 177 and asparagine 201. Chitin is bound by residues tryptophan 219 and threonine 230. 2 disordered regions span residues 329–368 (SSSASSTVSSSVSSTVSSSSSVSSSSSTSPSSSTATSSKT) and 381–478 (SSFE…TNSV). Composition is skewed to low complexity over residues 381 to 439 (SSFE…PVQD) and 451 to 477 (TSSTTQISSKYTSTIQSSSSEASSTNS). A lipid anchor (GPI-anchor amidated asparagine) is attached at asparagine 482. Residues 483 to 507 (GADLAQSLPREGKLFSVLVALLALL) constitute a propeptide, removed in mature form.

The protein belongs to the glycosyl hydrolase 16 family. CRH1 subfamily. In terms of processing, the GPI-anchor is attached to the protein in the endoplasmic reticulum and serves to target the protein to the cell surface. There, the glucosamine-inositol phospholipid moiety is cleaved off and the GPI-modified mannoprotein is covalently attached via its lipidless GPI glycan remnant to the 1,6-beta-glucan of the outer cell wall layer.

The protein localises to the secreted. It localises to the cell wall. It is found in the membrane. It catalyses the reaction Random endo-hydrolysis of N-acetyl-beta-D-glucosaminide (1-&gt;4)-beta-linkages in chitin and chitodextrins.. Dual chitinase/transglycosylase that plays a role in cell wall architecture. Chitinase and transglycosylase activities are coupled. Required for the polysaccharide cross-linking at the septa and the cell wall. More specifically, transfers chitin to both beta(1-3)- and beta(1-6)glucan in the cell wall. The minimal number of intact hexopyranose units required in the molecule of the acceptor oligosaccharide is two and the effectivity of the acceptor increased with the increasing length of its oligosaccharide chain. This chain is Congo red hypersensitive protein 1, found in Saccharomyces cerevisiae (strain ATCC 204508 / S288c) (Baker's yeast).